Here is a 406-residue protein sequence, read N- to C-terminus: Arginine deiminase (406 aa).

Catalysis depends on cysteine 396, which acts as the Amidino-cysteine intermediate.

The protein belongs to the arginine deiminase family.

The protein localises to the cytoplasm. It catalyses the reaction L-arginine + H2O = L-citrulline + NH4(+). It participates in amino-acid degradation; L-arginine degradation via ADI pathway; carbamoyl phosphate from L-arginine: step 1/2. This chain is Arginine deiminase, found in Vibrio campbellii (strain ATCC BAA-1116).